Reading from the N-terminus, the 240-residue chain is Transmembrane protein 65 (240 aa).

Residues 1–61 (MSRLLPLLRS…RRLGTHPKKE (61 aa)) constitute a mitochondrion transit peptide. The Cytoplasmic portion of the chain corresponds to 62–110 (PMEALNTAQGARDFIYSLHSTERSCLLKELHRFESIAIAQEKLEAPPPT). The chain crosses the membrane as a helical span at residues 111–131 (PGQLRYVFIHNAIPFIGFGFL). At 132–142 (DNAIMIVAGTH) the chain is on the extracellular side. A helical membrane pass occupies residues 143-165 (IEMSIGIILGISTMAAAALGNLV). The Cytoplasmic segment spans residues 166–209 (SDLAGLGLAGYVEALASRLGLSIPDLTPKQVDMWQTRLSTHLGK). The helical transmembrane segment at 210-230 (AVGVTIGCILGMFPLIFFGGG) threads the bilayer. The Extracellular segment spans residues 231–240 (EEDEKLETKS).

As to quaternary structure, monomer. Homodimer. Interacts with GJA1. Interacts weakly with DSP. Interacts with SCN1B. Predominantly expressed the ventricular tissue (at protein level).

The protein localises to the cell membrane. It is found in the mitochondrion inner membrane. Functionally, essential for maintaining proper cardiac intercalated disk (ICD) structure and function as well as cardiac conduction velocity in the heart. Its association with SCN1B is required for stabilizing the perinexus in the ICD and for localization of GJA1 and SCN5A to the ICD. May regulate the function of the gap junction protein GJA1 and may contribute to the stability and proper localization of GJA1 to cardiac intercalated disk thereby regulating gap junction communication. May also play a role in the regulation of mitochondrial respiration and mitochondrial DNA copy number maintenance. This is Transmembrane protein 65 (TMEM65) from Homo sapiens (Human).